The primary structure comprises 387 residues: NifS-like protein (387 aa).

Residues 58–59 and 184–186 contribute to the pyridoxal 5'-phosphate site; these read SE and SIN.

Belongs to the class-V pyridoxal-phosphate-dependent aminotransferase family. NifS/IscS subfamily. Requires pyridoxal 5'-phosphate as cofactor.

The protein resides in the virion. The chain is NifS-like protein from African swine fever virus (isolate Tick/South Africa/Pretoriuskop Pr4/1996) (ASFV).